We begin with the raw amino-acid sequence, 217 residues long: Ras-related protein RGP2 (217 aa).

GTP-binding positions include 19–26, 67–71, and 125–128; these read GDSGVGKS, DTAGQ, and NKSD. Residues Cys-214 and Cys-215 are each lipidated (S-geranylgeranyl cysteine).

The protein belongs to the small GTPase superfamily. Rab family.

The protein localises to the cell membrane. This is Ras-related protein RGP2 (RGP2) from Oryza sativa subsp. japonica (Rice).